A 614-amino-acid chain; its full sequence is Dihydroxy-acid dehydratase (614 aa).

D81 provides a ligand contact to Mg(2+). A [2Fe-2S] cluster-binding site is contributed by C122. Mg(2+) is bound by residues D123 and K124. K124 bears the N6-carboxylysine mark. Residue C195 coordinates [2Fe-2S] cluster. Position 491 (E491) interacts with Mg(2+). The active-site Proton acceptor is the S517.

Belongs to the IlvD/Edd family. As to quaternary structure, homodimer. Requires [2Fe-2S] cluster as cofactor. Mg(2+) is required as a cofactor.

It carries out the reaction (2R)-2,3-dihydroxy-3-methylbutanoate = 3-methyl-2-oxobutanoate + H2O. The enzyme catalyses (2R,3R)-2,3-dihydroxy-3-methylpentanoate = (S)-3-methyl-2-oxopentanoate + H2O. Its pathway is amino-acid biosynthesis; L-isoleucine biosynthesis; L-isoleucine from 2-oxobutanoate: step 3/4. It functions in the pathway amino-acid biosynthesis; L-valine biosynthesis; L-valine from pyruvate: step 3/4. In terms of biological role, functions in the biosynthesis of branched-chain amino acids. Catalyzes the dehydration of (2R,3R)-2,3-dihydroxy-3-methylpentanoate (2,3-dihydroxy-3-methylvalerate) into 2-oxo-3-methylpentanoate (2-oxo-3-methylvalerate) and of (2R)-2,3-dihydroxy-3-methylbutanoate (2,3-dihydroxyisovalerate) into 2-oxo-3-methylbutanoate (2-oxoisovalerate), the penultimate precursor to L-isoleucine and L-valine, respectively. This Rhodopseudomonas palustris (strain BisA53) protein is Dihydroxy-acid dehydratase.